The sequence spans 384 residues: Galactokinase (384 aa).

34–37 contacts substrate; that stretch reads EHTD. Residue 123 to 129 participates in ATP binding; that stretch reads SSGLSSS. Mg(2+) contacts are provided by Ser-129 and Glu-161. The Proton acceptor role is filled by Asp-173. Substrate is bound at residue Tyr-222.

It belongs to the GHMP kinase family. GalK subfamily.

The protein resides in the cytoplasm. It catalyses the reaction alpha-D-galactose + ATP = alpha-D-galactose 1-phosphate + ADP + H(+). Its pathway is carbohydrate metabolism; galactose metabolism. Its function is as follows. Catalyzes the transfer of the gamma-phosphate of ATP to D-galactose to form alpha-D-galactose-1-phosphate (Gal-1-P). The sequence is that of Galactokinase from Haemophilus influenzae (strain PittEE).